The chain runs to 53 residues: Small polypeptide DEVIL 16 (53 aa).

Asn6 carries N-linked (GlcNAc...) asparagine glycosylation. The tract at residues 14–45 (TFGQKCSHVVKKQRAKFYILRRCIAMLVCWHD) is required for DVL/RTFL small polypeptide activity. The chain crosses the membrane as a helical span at residues 30–46 (FYILRRCIAMLVCWHDQ).

The protein belongs to the DVL/RTFL small polypeptides family. In terms of tissue distribution, mostly expressed in stems, flower buds, flowers and seedling shoots, to a lesser extent, in roots and young cauline leaves, but not in mature rosette leaves. Barely observed in cotyledons and leaf primordia.

It localises to the cell membrane. Functionally, small polypeptide acting as a regulatory molecule which coordinates cellular responses required for differentiation, growth and development, probably by restricting polar cell proliferation in lateral organs (e.g. leaves) and coordinating socket cell recruitment and differentiation at trichome sites. Regulates the positional cue and cell proliferation along the body axis. The protein is Small polypeptide DEVIL 16 of Arabidopsis thaliana (Mouse-ear cress).